The following is a 316-amino-acid chain: Ribosomal RNA large subunit methyltransferase F (316 aa).

This sequence belongs to the methyltransferase superfamily. METTL16/RlmF family.

It localises to the cytoplasm. It carries out the reaction adenosine(1618) in 23S rRNA + S-adenosyl-L-methionine = N(6)-methyladenosine(1618) in 23S rRNA + S-adenosyl-L-homocysteine + H(+). Its function is as follows. Specifically methylates the adenine in position 1618 of 23S rRNA. The sequence is that of Ribosomal RNA large subunit methyltransferase F from Pseudomonas putida (strain GB-1).